Here is an 81-residue protein sequence, read N- to C-terminus: uncharacterized protein (81 aa).

This is an uncharacterized protein from Acidianus bottle-shaped virus (isolate Italy/Pozzuoli) (ABV).